Reading from the N-terminus, the 160-residue chain is Large ribosomal subunit protein eL29 (160 aa).

Basic residues predominate over residues methionine 1–serine 26. Disordered stretches follow at residues methionine 1–glycine 34 and arginine 115–proline 160. At lysine 5 the chain carries N6-methyllysine. The residue at position 31 (serine 31) is a Phosphoserine. At lysine 33 the chain carries N6-acetyllysine. Residues lysine 126–proline 160 show a composition bias toward low complexity. 2 consecutive repeat copies span residues alanine 127–lysine 134 and alanine 135–glutamine 142. The 2 X 8 AA tandem repeats of A-X-A-K-A-P-A-[KQ] stretch occupies residues alanine 127–glutamine 142. Position 138 is a phosphoserine (serine 138). Lysine 145 carries the post-translational modification N6-acetyllysine.

This sequence belongs to the eukaryotic ribosomal protein eL29 family. As to quaternary structure, component of the large ribosomal subunit.

The protein localises to the cytoplasm. Its function is as follows. Component of the large ribosomal subunit. The ribosome is a large ribonucleoprotein complex responsible for the synthesis of proteins in the cell. The sequence is that of Large ribosomal subunit protein eL29 (Rpl29) from Mus musculus (Mouse).